Here is a 405-residue protein sequence, read N- to C-terminus: S-adenosylmethionine:tRNA ribosyltransferase-isomerase (405 aa).

It belongs to the QueA family. As to quaternary structure, monomer.

It is found in the cytoplasm. It catalyses the reaction 7-aminomethyl-7-carbaguanosine(34) in tRNA + S-adenosyl-L-methionine = epoxyqueuosine(34) in tRNA + adenine + L-methionine + 2 H(+). Its pathway is tRNA modification; tRNA-queuosine biosynthesis. Transfers and isomerizes the ribose moiety from AdoMet to the 7-aminomethyl group of 7-deazaguanine (preQ1-tRNA) to give epoxyqueuosine (oQ-tRNA). In Psychrobacter cryohalolentis (strain ATCC BAA-1226 / DSM 17306 / VKM B-2378 / K5), this protein is S-adenosylmethionine:tRNA ribosyltransferase-isomerase.